Reading from the N-terminus, the 770-residue chain is Tripartite terminase subunit 1 (770 aa).

Residues 199–227 form a C3H1-type zinc finger; that stretch reads CAICFEELCITANQGETLHRRLLGCICDH. 675–682 lines the ATP pocket; the sequence is FTSVFHCG.

This sequence belongs to the herpesviridae TRM1 protein family. As to quaternary structure, associates with TRM2 and TRM3 to form the tripartite terminase complex. Interacts with portal protein.

It localises to the host nucleus. Functionally, component of the molecular motor that translocates viral genomic DNA in empty capsid during DNA packaging. Forms a tripartite terminase complex together with TRM2 and TRM3 in the host cytoplasm. Once the complex reaches the host nucleus, it interacts with the capsid portal vertex. This portal forms a ring in which genomic DNA is translocated into the capsid. TRM1 carries an endonuclease activity that plays an important role for the cleavage of concatemeric viral DNA into unit length genomes. This chain is Tripartite terminase subunit 1, found in Varicella-zoster virus (strain Dumas) (HHV-3).